A 292-amino-acid chain; its full sequence is Non-homologous end joining protein Ku (292 aa).

The Ku domain maps to 12–196 (KLSLVTCPVV…KITKDMVELA (185 aa)). Positions 231–292 (KPIKLPEPEE…RSAARQRKAG (62 aa)) are disordered. Over residues 271 to 292 (APAHRRPAKKAHRSAARQRKAG) the composition is skewed to basic residues.

It belongs to the prokaryotic Ku family. As to quaternary structure, homodimer. Interacts with LigD.

Its function is as follows. With LigD forms a non-homologous end joining (NHEJ) DNA repair enzyme, which repairs dsDNA breaks with reduced fidelity. Binds linear dsDNA with 5'- and 3'- overhangs but not closed circular dsDNA nor ssDNA. Recruits and stimulates the ligase activity of LigD. This is Non-homologous end joining protein Ku from Bradyrhizobium sp. (strain ORS 278).